Consider the following 161-residue polypeptide: MSKNRSSLQSGPLNSELLEEQKQEIYEAFSLFDMNNDGFLDYHELKVAMKALGFELPKREILDLIDEYDSEGRHLMKYDDFYIVMGEKILKRDPLDEIKRAFQLFDDDHTGKISIKNLRRVAKELGETLTDEELRAMIEEFDLDGDGEINENEFIAICTDS.

EF-hand domains lie at 20 to 55 (EQKQ…LGFE), 56 to 91 (LPKR…KILK), 93 to 128 (DPLD…LGET), and 129 to 161 (LTDE…CTDS). Ca(2+)-binding residues include Asp-33, Asn-35, Asp-37, and Glu-44. Residue Thr-130 is modified to Phosphothreonine. Positions 142, 144, 146, 148, and 153 each coordinate Ca(2+).

Belongs to the centrin family. As to quaternary structure, component of the spindle pole body (SPB), acting as the connector of microtubule arrays in the cytoplasm and the nucleoplasm, is involved in nuclear positioning before chromosome segregation, SPB separation, spindle formation, chromosome segregation, nuclear migration into the bud, nuclear reorientation after cytokinesis and nuclear fusion during conjugation. The SPB half-bridge, which is tightly associated with the cytoplasmic side of the nuclear envelope and the SPB, is playing a key role as the starting structure for and in the initiation of SPB duplication in G1. At the SPB half-bridge CDC31 interacts with KAR1, MPS3 and SFI1. Interacts with KIC1. Interacts with VPS13. Associates with nuclear pore complexes (NPCs).

The protein localises to the nucleus envelope. Its subcellular location is the cytoplasm. It localises to the cytoskeleton. The protein resides in the microtubule organizing center. It is found in the spindle pole body. Functions as a component of the spindle pole body (SPB) half-bridge. At the SPB, it is recruited by KAR1 and MPS3 to the SPB half-bridge and involved in the initial steps of SPB duplication. Also involved in connection with the protein kinase KIC1 in the maintenance of cell morphology and integrity. May play a role in vesicle-mediated transport, in a VPS13-dependent manner. This chain is Cell division control protein 31 (CDC31), found in Saccharomyces cerevisiae (strain ATCC 204508 / S288c) (Baker's yeast).